The primary structure comprises 593 residues: Tyrosine-protein phosphatase non-receptor type 11 (593 aa).

N-acetylthreonine is present on Thr2. 2 consecutive SH2 domains span residues 6-102 and 112-216; these read WFHP…KYPL and WFHG…KQPL. Phosphotyrosine is present on residues Tyr62 and Tyr66. Residues 247 to 521 enclose the Tyrosine-protein phosphatase domain; it reads FWEEFETLQQ…RFIYMAVQHY (275 aa). Residues Asp425, 459-465, and Gln506 each bind substrate; that span reads CSAGIGR. The active-site Phosphocysteine intermediate is the Cys459. 2 positions are modified to phosphotyrosine; by PDGFR: Tyr542 and Tyr580.

Belongs to the protein-tyrosine phosphatase family. Non-receptor class 2 subfamily. In terms of assembly, interacts with CD84 and with phosphorylated SIT1 and MZPL1. Interacts with FCRL4, FCRL6 and ANKHD1. Interacts with GAREM1 (tyrosine phosphorylated); the interaction increases MAPK/ERK activity and does not affect the GRB2/SOS complex formation. Interacts with PTPNS1 and BCAR3. Interacts with phosphorylated LIME1. Interacts with SHB and INPP5D/SHIP1. Interacts with KIR2DL1; the interaction is enhanced by ARRB2. Interacts with GAB2. Interacts with TERT; the interaction retains TERT in the nucleus. Interacts with PECAM1 and FER. Interacts with EPHA2 (activated); participates in PTK2/FAK1 dephosphorylation in EPHA2 downstream signaling. Interacts with MILR1 (tyrosine phosphorylated). Interacts with FLT1 (tyrosine-phosphorylated), FLT3 (tyrosine-phosphorylated), FLT4 (tyrosine-phosphorylated), KIT and GRB2. Interacts with ROS1; mediates PTPN11 phosphorylation. Interacts with PDGFRA (tyrosine phosphorylated). Interacts with PDGFRB (tyrosine phosphorylated); this interaction increases the PTPN11 phosphatase activity. Interacts (via SH2 domain) with TEK/TIE2 (tyrosine phosphorylated). Interacts with CEACAM1 (via cytoplasmic domain); this interaction depends on the monomer/dimer equilibrium and is phosphorylation-dependent. Interacts with MPIG6B (via ITIM motif). Interacts with SIGLEC10. Interacts with Lilrb4a (when tyrosine phosphorylated). Interacts with SIGLEC10. Interacts with CLEC12B (via ITIM motif); this interaction triggers dephosphorylation and activation of PTPN11. Interacts (via SH2 domains) with NEDD9/CAS-L; the interaction is enhanced when NEDD9/CAS-L is tyrosine phosphorylated. Interacts with PIRB; when PIRB is phosphorylated by LYN at 'Tyr-794' and 'Tyr-824'. In terms of processing, phosphorylated on Tyr-542 and Tyr-580 upon receptor protein tyrosine kinase activation; which creates a binding site for GRB2 and other SH2-containing proteins. Phosphorylated upon activation of the receptor-type kinase FLT3. Phosphorylated by activated PDGFRB. Phosphorylated upon activation of the receptor-type kinase PDGFRA. In terms of tissue distribution, highly expressed in brain, heart and kidney.

The protein localises to the cytoplasm. It carries out the reaction O-phospho-L-tyrosyl-[protein] + H2O = L-tyrosyl-[protein] + phosphate. Its function is as follows. Acts downstream of various receptor and cytoplasmic protein tyrosine kinases to participate in the signal transduction from the cell surface to the nucleus. Positively regulates MAPK signal transduction pathway. Dephosphorylates GAB1, ARHGAP35 and EGFR. Dephosphorylates ROCK2 at 'Tyr-722' resulting in stimulation of its RhoA binding activity. Dephosphorylates CDC73. Dephosphorylates SOX9 on tyrosine residues, leading to inactivate SOX9 and promote ossification. Dephosphorylates tyrosine-phosphorylated NEDD9/CAS-L. This Mus musculus (Mouse) protein is Tyrosine-protein phosphatase non-receptor type 11 (Ptpn11).